A 277-amino-acid polypeptide reads, in one-letter code: Large ribosomal subunit protein uL2c (277 aa).

The interval Val-224–Arg-257 is disordered.

It belongs to the universal ribosomal protein uL2 family. As to quaternary structure, part of the 50S ribosomal subunit.

The protein resides in the plastid. Its subcellular location is the chloroplast. This chain is Large ribosomal subunit protein uL2c (rpl2), found in Anthoceros angustus (Hornwort).